The sequence spans 216 residues: Thiosulfate dehydrogenase electron acceptor (216 aa).

The signal sequence occupies residues 1 to 22 (MKSIHWPLAGVAALLLSMQAQA). 2 consecutive Cytochrome c domains span residues 23 to 108 (ADGQ…EAMP) and 118 to 210 (SEAA…ANVG). Heme c is bound by residues cysteine 41, cysteine 44, histidine 45, cysteine 141, cysteine 144, and histidine 145.

Post-translationally, binds 2 heme c groups covalently per subunit.

Acts as an electron acceptor for the thiosulfate dehydrogenase TsdA. The polypeptide is Thiosulfate dehydrogenase electron acceptor (tsdB) (Stutzerimonas stutzeri (strain A1501) (Pseudomonas stutzeri)).